Consider the following 390-residue polypeptide: 1-deoxy-D-xylulose 5-phosphate reductoisomerase (390 aa).

The NADPH site is built by threonine 10, glycine 11, serine 12, isoleucine 13, glycine 36, arginine 37, asparagine 38, and asparagine 121. Residue lysine 122 participates in 1-deoxy-D-xylulose 5-phosphate binding. Glutamate 123 is a binding site for NADPH. Mn(2+) is bound at residue aspartate 147. 1-deoxy-D-xylulose 5-phosphate is bound by residues serine 148, glutamate 149, serine 173, and histidine 196. Glutamate 149 provides a ligand contact to Mn(2+). Residue glycine 202 participates in NADPH binding. Positions 209, 214, 215, and 218 each coordinate 1-deoxy-D-xylulose 5-phosphate. Position 218 (glutamate 218) interacts with Mn(2+). The tract at residues 367–390 is disordered; that stretch reads AASEHGRREAEKRVGARAHAPAGR. Residues 370–380 are compositionally biased toward basic and acidic residues; sequence EHGRREAEKRV.

Belongs to the DXR family. Mg(2+) serves as cofactor. It depends on Mn(2+) as a cofactor.

The catalysed reaction is 2-C-methyl-D-erythritol 4-phosphate + NADP(+) = 1-deoxy-D-xylulose 5-phosphate + NADPH + H(+). It participates in isoprenoid biosynthesis; isopentenyl diphosphate biosynthesis via DXP pathway; isopentenyl diphosphate from 1-deoxy-D-xylulose 5-phosphate: step 1/6. Catalyzes the NADPH-dependent rearrangement and reduction of 1-deoxy-D-xylulose-5-phosphate (DXP) to 2-C-methyl-D-erythritol 4-phosphate (MEP). The protein is 1-deoxy-D-xylulose 5-phosphate reductoisomerase of Anaeromyxobacter sp. (strain K).